Reading from the N-terminus, the 530-residue chain is MNQPVFVLNTNAKRENQKEAQQGIFLAVKSVASIIKTCLGPKAMLKMILDPMGTTVVTNDGNAILREIDVTHPAAKSMIELSRAQDENVGDGTTSVVILAAEVLASSELFIEKKIHPHYIIKAFRMALDDSLSIVDQYSVAIDLKNRPEVLKVVQSCIGTKFIGKWGSLMCNLALDAVMTVHIQEEDGRSEIDIKRYAKVEKIPGGDISDCRVIRGVMLNKDVTHPKMKRMIKNPRIVLLDCSLEYKKGESDTMVDITNEDDFSALLKIEEEYVQRICEDIIKLKPDLVFTEKGVSDLAQHFFVKKGITCLRRLKKSENNRIARISGATIVSRTDELQESDIGTGCGLFEIRKIGDEYFTFLEDCKEPKACTILLRGASKDILNEVERNLTDALNVARNIVLDPRLVPGGGAIEMALSQALSEKSKSIEGLHQLPYKALAQSLECIPKILAQNCGANTVKLLTELRAKHATNPTENYTYGVDGDNGTIVDMKQLGIWDTHSVKVQTLKTAIESACTMLRVDHIASAASKQ.

It belongs to the TCP-1 chaperonin family. As to quaternary structure, heterooligomeric complex of about 850 to 900 kDa that forms two stacked rings, 12 to 16 nm in diameter.

It is found in the cytoplasm. Its function is as follows. Molecular chaperone; assists the folding of proteins upon ATP hydrolysis. Known to play a role, in vitro, in the folding of actin and tubulin. The protein is T-complex protein 1 subunit gamma (cct3) of Dictyostelium discoideum (Social amoeba).